Consider the following 368-residue polypeptide: Cyanide hydratase (368 aa).

Residues 6-285 (YKAAVVTSEP…DGLMYVDIDL (280 aa)) enclose the CN hydrolase domain. Glu46 (proton acceptor) is an active-site residue. Lys128 is a catalytic residue. Residue Cys163 is the Nucleophile of the active site. Positions 341 to 368 (LDRPLEEEDYRQGTDAGETEKASSNGHA) are disordered.

The protein belongs to the carbon-nitrogen hydrolase superfamily. Nitrilase family. As to quaternary structure, oligomer of dimers, forming left-handed helical fibers.

It carries out the reaction formamide = hydrogen cyanide + H2O. Its function is as follows. Catalyzes the hydration of cyanide to formamide. Degradation of cyanide may be important for plant pathogenic fungi in infection of cyanogenic plants. This chain is Cyanide hydratase, found in Microdochium sorghi (Zonate leaf spot disease fungus).